Consider the following 365-residue polypeptide: 3-dehydroquinate synthase (365 aa).

NAD(+) is bound by residues 106–110 (GVIGD), 130–131 (TT), K142, K151, and 169–172 (FFAT). Residues E184, H247, and H264 each coordinate Zn(2+).

Belongs to the sugar phosphate cyclases superfamily. Dehydroquinate synthase family. It depends on Co(2+) as a cofactor. Zn(2+) is required as a cofactor. NAD(+) serves as cofactor.

The protein localises to the cytoplasm. The enzyme catalyses 7-phospho-2-dehydro-3-deoxy-D-arabino-heptonate = 3-dehydroquinate + phosphate. Its pathway is metabolic intermediate biosynthesis; chorismate biosynthesis; chorismate from D-erythrose 4-phosphate and phosphoenolpyruvate: step 2/7. In terms of biological role, catalyzes the conversion of 3-deoxy-D-arabino-heptulosonate 7-phosphate (DAHP) to dehydroquinate (DHQ). In Listeria welshimeri serovar 6b (strain ATCC 35897 / DSM 20650 / CCUG 15529 / CIP 8149 / NCTC 11857 / SLCC 5334 / V8), this protein is 3-dehydroquinate synthase.